A 761-amino-acid polypeptide reads, in one-letter code: Semaphorin-4A (761 aa).

Positions 1–32 (MALPALGLDPWSLLGLFLFQLLQLLLPTTTAG) are cleaved as a signal peptide. The Extracellular segment spans residues 33–683 (GGGQGPMPRV…LAAQQSYWPH (651 aa)). Residues 36–494 (QGPMPRVRYY…FSGGVWRVPR (459 aa)) form the Sema domain. Residues Cys-113 and Cys-124 are joined by a disulfide bond. N-linked (GlcNAc...) asparagine glycans are attached at residues Asn-120 and Asn-135. Disulfide bonds link Cys-142-Cys-151, Cys-269-Cys-379, and Cys-293-Cys-339. Asn-496 carries N-linked (GlcNAc...) asparagine glycosylation. Residues 496-548 (NCSVYESCVDCVLARDPHCAWDPESRTCCLLSAPNLNSWKQDMERGNPEWACA) form the PSI domain. Intrachain disulfides connect Cys-497–Cys-514, Cys-506–Cys-523, and Cys-580–Cys-624. The 59-residue stretch at 573 to 631 (NSILELPCPHLSALASYYWSHGPAAVPEASSTVYNGSLLLIVQDGVGGLYQCWATENGF) folds into the Ig-like C2-type domain. An N-linked (GlcNAc...) asparagine glycan is attached at Asn-607. Residues 684–704 (FVTVTVLFALVLSGALIILVA) form a helical membrane-spanning segment. The Cytoplasmic portion of the chain corresponds to 705 to 761 (SPLRALRARGKVQGCETLRPGEKAPLSREQHLQSPKECRTSASDVDADNNCLGTEVA). Positions 722-749 (LRPGEKAPLSREQHLQSPKECRTSASDV) are disordered. Basic and acidic residues predominate over residues 723–743 (RPGEKAPLSREQHLQSPKECR).

Belongs to the semaphorin family. Interacts with PLXNB1, PLXNB2, PLXNB3, PLXND1 and TIMD2.

The protein localises to the cell membrane. Its function is as follows. Cell surface receptor for PLXNB1, PLXNB2, PLXNB3 and PLXND1 that plays an important role in cell-cell signaling. Regulates glutamatergic and GABAergic synapse development. Promotes the development of inhibitory synapses in a PLXNB1-dependent manner and promotes the development of excitatory synapses in a PLXNB2-dependent manner. Plays a role in priming antigen-specific T-cells, promotes differentiation of Th1 T-helper cells, and thereby contributes to adaptive immunity. Promotes phosphorylation of TIMD2. Inhibits angiogenesis. Promotes axon growth cone collapse. Inhibits axonal extension by providing local signals to specify territories inaccessible for growing axons. The polypeptide is Semaphorin-4A (SEMA4A) (Homo sapiens (Human)).